The chain runs to 513 residues: L-threonine dehydratase biosynthetic IlvA (513 aa).

An N6-(pyridoxal phosphate)lysine modification is found at Lys-63. Pyridoxal 5'-phosphate contacts are provided by residues Asn-90, 189 to 193 (GGGGL), and Ser-316. 2 consecutive ACT-like domains span residues 340-411 (ALLA…DMSD) and 433-504 (RLYT…DVTK).

The protein belongs to the serine/threonine dehydratase family. Homotetramer. Pyridoxal 5'-phosphate serves as cofactor.

The enzyme catalyses L-threonine = 2-oxobutanoate + NH4(+). The protein operates within amino-acid biosynthesis; L-isoleucine biosynthesis; 2-oxobutanoate from L-threonine: step 1/1. Functionally, catalyzes the anaerobic formation of alpha-ketobutyrate and ammonia from threonine in a two-step reaction. The first step involved a dehydration of threonine and a production of enamine intermediates (aminocrotonate), which tautomerizes to its imine form (iminobutyrate). Both intermediates are unstable and short-lived. The second step is the nonenzymatic hydrolysis of the enamine/imine intermediates to form 2-ketobutyrate and free ammonia. In the low water environment of the cell, the second step is accelerated by RidA. This Haemophilus influenzae (strain ATCC 51907 / DSM 11121 / KW20 / Rd) protein is L-threonine dehydratase biosynthetic IlvA (ilvA).